The sequence spans 98 residues: MTTMFFNLLLAFMVALMGVYIYREHLMSTLLCLEGMMLSIFIMVSLTLLHHHLNSTMMFPLILLVFSACEAGVGLALLVKTSNSYGTDYIDNLNLLQC.

A run of 3 helical transmembrane segments spans residues M1–I21, T29–L49, and F59–V79.

This sequence belongs to the complex I subunit 4L family. In terms of assembly, core subunit of respiratory chain NADH dehydrogenase (Complex I) which is composed of 45 different subunits.

It is found in the mitochondrion inner membrane. The catalysed reaction is a ubiquinone + NADH + 5 H(+)(in) = a ubiquinol + NAD(+) + 4 H(+)(out). Functionally, core subunit of the mitochondrial membrane respiratory chain NADH dehydrogenase (Complex I) which catalyzes electron transfer from NADH through the respiratory chain, using ubiquinone as an electron acceptor. Part of the enzyme membrane arm which is embedded in the lipid bilayer and involved in proton translocation. This Zaglossus bruijni (Western long-beaked echidna) protein is NADH-ubiquinone oxidoreductase chain 4L (MT-ND4L).